Consider the following 319-residue polypeptide: Annexin A4 (319 aa).

Alanine 2 bears the N-acetylalanine mark. Threonine 7 carries the phosphothreonine modification. A Phosphoserine modification is found at serine 12. 4 Annexin repeats span residues 14–85 (FSAT…GMIT), 86–157 (PTVL…SLSA), 169–241 (ALMR…AIVK), and 245–316 (NKSA…ILCG). Lysine 213, lysine 293, and lysine 300 each carry N6-acetyllysine.

It belongs to the annexin family. As to expression, expressed in pancreas (at protein level). Also detected in liver, spleen, intestine, stomach, kidney, and adrenal glands.

It is found in the zymogen granule membrane. In terms of biological role, calcium/phospholipid-binding protein which promotes membrane fusion and is involved in exocytosis. This is Annexin A4 (ANXA4) from Canis lupus familiaris (Dog).